Here is a 298-residue protein sequence, read N- to C-terminus: N-acetylmuramic acid 6-phosphate etherase (298 aa).

Residues 55 to 218 enclose the SIS domain; it reads IHTQVSGGGR…STGLMIKSGK (164 aa). Residue Glu83 is the Proton donor of the active site. Glu114 is a catalytic residue.

The protein belongs to the GCKR-like family. MurNAc-6-P etherase subfamily. Homodimer.

It carries out the reaction N-acetyl-D-muramate 6-phosphate + H2O = N-acetyl-D-glucosamine 6-phosphate + (R)-lactate. The protein operates within amino-sugar metabolism; 1,6-anhydro-N-acetylmuramate degradation. Its pathway is amino-sugar metabolism; N-acetylmuramate degradation. It functions in the pathway cell wall biogenesis; peptidoglycan recycling. Functionally, specifically catalyzes the cleavage of the D-lactyl ether substituent of MurNAc 6-phosphate, producing GlcNAc 6-phosphate and D-lactate. Together with AnmK, is also required for the utilization of anhydro-N-acetylmuramic acid (anhMurNAc) either imported from the medium or derived from its own cell wall murein, and thus plays a role in cell wall recycling. This Escherichia coli O1:K1 / APEC protein is N-acetylmuramic acid 6-phosphate etherase.